The sequence spans 110 residues: MILVTTTPSVDGYTITNYQGIVFGEVVSGVNMFKDLGAGLRNMFGGRSQGYEEELMRARNEAIAEMQQRAEAMGAHAVVGVDIDYEVLGADNGMLMVTASGTAVQIARTA.

It belongs to the UPF0145 family.

The protein is UPF0145 protein BLD_1357 of Bifidobacterium longum (strain DJO10A).